A 138-amino-acid polypeptide reads, in one-letter code: Transcription antitermination protein NusB (138 aa).

The protein belongs to the NusB family.

Involved in transcription antitermination. Required for transcription of ribosomal RNA (rRNA) genes. Binds specifically to the boxA antiterminator sequence of the ribosomal RNA (rrn) operons. In Photorhabdus laumondii subsp. laumondii (strain DSM 15139 / CIP 105565 / TT01) (Photorhabdus luminescens subsp. laumondii), this protein is Transcription antitermination protein NusB.